The following is an 897-amino-acid chain: Patched domain-containing protein 1 (897 aa).

Residues 25–45 (PVFFLTVPAVLTIIFGSTVLS) form a helical membrane-spanning segment. Asn132, Asn167, and Asn179 each carry an N-linked (GlcNAc...) asparagine glycan. The next 2 membrane-spanning stretches (helical) occupy residues 271 to 291 (GVLAKSEVLVSLVLVLLAATI) and 306 to 326 (GLLGVLTICIANVTAAGIFFI). The SSD domain occupies 273 to 433 (LAKSEVLVSL…FSFYGSCLVF (161 aa)). Residue Asn332 is glycosylated (N-linked (GlcNAc...) asparagine). The next 4 helical transmembrane spans lie at 335 to 355 (LLGIPFFAMGHGTKGVFELLA), 377 to 397 (VMVCYTMTSSLYIITFGMGAS), 414 to 434 (VAVLVNYFYVFSFYGSCLVFA), and 506 to 526 (PFVVILYLIYASFSFMGCLQI). N-linked (GlcNAc...) asparagine glycosylation is found at Asn572 and Asn603. The next 3 membrane-spanning stretches (helical) occupy residues 701–721 (PILTSGFSVLTILILTFFLVI), 727–747 (FWLILTVTSVELGVLGLMTLW), and 754–774 (ISILCLIYTLNFAMDHCAPHL). An N-linked (GlcNAc...) asparagine glycan is attached at Asn803. Helical transmembrane passes span 806-826 (CFVIGIMPLLFVPSNLTYTLF) and 831-851 (LTAGCTVLHCFVILPVFLTFF). Residues 856–866 (KRHKKKKRAKR) show a composition bias toward basic residues. The tract at residues 856–881 (KRHKKKKRAKRKEREREREREREREE) is disordered. Basic and acidic residues predominate over residues 867–881 (KEREREREREREREE).

Belongs to the patched family.

Its subcellular location is the cell membrane. The protein localises to the cell projection. It localises to the dendritic spine. Its function is as follows. Can bind cholesterol in vitro. This is Patched domain-containing protein 1 (ptchd1) from Danio rerio (Zebrafish).